Here is a 903-residue protein sequence, read N- to C-terminus: DNA transposase THAP9 (903 aa).

A THAP-type zinc finger spans residues 1–89 (MTRSCSAVGC…LKKGAVPSVS (89 aa)). The HCFC1-binding motif (HBM) signature appears at 123 to 126 (DHNY).

Active transposase that specifically recognizes the bipartite 5'-TXXGGGX(A/T)-3' consensus motif and mediates transposition. The polypeptide is DNA transposase THAP9 (THAP9) (Homo sapiens (Human)).